The sequence spans 83 residues: MLLKSLEFKRGDGIQVKVTEIPVLKEDEHYFFMLHHHLQFYLKEVFSSNSRAKVYSFRHYMKRRMKWADYQAVFHQEVLKHNA.

This is an uncharacterized protein from Bacillus subtilis (strain 168).